Here is a 293-residue protein sequence, read N- to C-terminus: Pantothenate synthetase (293 aa).

30–37 serves as a coordination point for ATP; that stretch reads MGNLHEGH. The active-site Proton donor is His37. Gln61 contacts (R)-pantoate. Gln61 serves as a coordination point for beta-alanine. 149 to 152 provides a ligand contact to ATP; the sequence is GEKD. Gln155 provides a ligand contact to (R)-pantoate. Residues Val178 and 186–189 each bind ATP; that span reads MSSR.

Belongs to the pantothenate synthetase family. Homodimer.

It is found in the cytoplasm. It carries out the reaction (R)-pantoate + beta-alanine + ATP = (R)-pantothenate + AMP + diphosphate + H(+). It participates in cofactor biosynthesis; (R)-pantothenate biosynthesis; (R)-pantothenate from (R)-pantoate and beta-alanine: step 1/1. Catalyzes the condensation of pantoate with beta-alanine in an ATP-dependent reaction via a pantoyl-adenylate intermediate. This Vibrio cholerae serotype O1 (strain ATCC 39541 / Classical Ogawa 395 / O395) protein is Pantothenate synthetase.